The primary structure comprises 305 residues: Tyrosine recombinase XerC (305 aa).

Residues threonine 4–glutamate 95 form the Core-binding (CB) domain. The Tyr recombinase domain maps to leucine 116–threonine 298. Active-site residues include arginine 159, lysine 182, histidine 250, arginine 253, and histidine 276. Residue tyrosine 285 is the O-(3'-phospho-DNA)-tyrosine intermediate of the active site.

The protein belongs to the 'phage' integrase family. XerC subfamily. In terms of assembly, forms a cyclic heterotetrameric complex composed of two molecules of XerC and two molecules of XerD.

The protein localises to the cytoplasm. In terms of biological role, site-specific tyrosine recombinase, which acts by catalyzing the cutting and rejoining of the recombining DNA molecules. The XerC-XerD complex is essential to convert dimers of the bacterial chromosome into monomers to permit their segregation at cell division. It also contributes to the segregational stability of plasmids. The protein is Tyrosine recombinase XerC of Rickettsia canadensis (strain McKiel).